The following is a 268-amino-acid chain: Urease accessory protein UreD (268 aa).

The protein belongs to the UreD family. UreD, UreF and UreG form a complex that acts as a GTP-hydrolysis-dependent molecular chaperone, activating the urease apoprotein by helping to assemble the nickel containing metallocenter of UreC. The UreE protein probably delivers the nickel.

It is found in the cytoplasm. In terms of biological role, required for maturation of urease via the functional incorporation of the urease nickel metallocenter. The polypeptide is Urease accessory protein UreD (Lysinibacillus sphaericus (strain C3-41)).